The following is a 168-amino-acid chain: G/U mismatch-specific DNA glycosylase (168 aa).

Belongs to the uracil-DNA glycosylase (UDG) superfamily. TDG/mug family. As to quaternary structure, binds DNA as a monomer.

The protein localises to the cytoplasm. The catalysed reaction is Specifically hydrolyzes mismatched double-stranded DNA and polynucleotides, releasing free uracil.. In terms of biological role, excises ethenocytosine and uracil, which can arise by alkylation or deamination of cytosine, respectively, from the corresponding mispairs with guanine in ds-DNA. It is capable of hydrolyzing the carbon-nitrogen bond between the sugar-phosphate backbone of the DNA and the mispaired base. The complementary strand guanine functions in substrate recognition. Required for DNA damage lesion repair in stationary-phase cells. The protein is G/U mismatch-specific DNA glycosylase of Escherichia fergusonii (strain ATCC 35469 / DSM 13698 / CCUG 18766 / IAM 14443 / JCM 21226 / LMG 7866 / NBRC 102419 / NCTC 12128 / CDC 0568-73).